The following is a 247-amino-acid chain: Uridylate kinase (247 aa).

17–20 is a binding site for ATP; the sequence is KFSG. Glycine 59 contributes to the UMP binding site. The ATP site is built by glycine 60 and arginine 64. Residues aspartate 79 and 140–147 each bind UMP; that span reads TGNPFFTT. The ATP site is built by threonine 167, tyrosine 173, and aspartate 176.

This sequence belongs to the UMP kinase family. As to quaternary structure, homohexamer.

The protein resides in the cytoplasm. The catalysed reaction is UMP + ATP = UDP + ADP. It participates in pyrimidine metabolism; CTP biosynthesis via de novo pathway; UDP from UMP (UMPK route): step 1/1. Inhibited by UTP. Functionally, catalyzes the reversible phosphorylation of UMP to UDP. The sequence is that of Uridylate kinase from Legionella pneumophila subsp. pneumophila (strain Philadelphia 1 / ATCC 33152 / DSM 7513).